The primary structure comprises 774 residues: Polyribonucleotide nucleotidyltransferase (774 aa).

Mg(2+) is bound by residues aspartate 485 and aspartate 491. A KH domain is found at 552–611 (PRIETMSVPKDKIRDIIGTGGKIIREIVATTGAKVDIDDDGTVKISSSDTAQIEAARNWI). One can recognise an S1 motif domain in the interval 621–689 (GKIYTGKVVN…NRGKVRLSMR (69 aa)). The segment at 689 to 774 (RVVDQETGEE…APAFLTRDDD (86 aa)) is disordered. The span at 700–755 (PDTRPPREERPRGDRGDRGDRGPRRDGDRRREGGDRGPRRDRGDRGDRPRRERSEG) shows a compositional bias: basic and acidic residues.

It belongs to the polyribonucleotide nucleotidyltransferase family. The cofactor is Mg(2+).

The protein resides in the cytoplasm. The catalysed reaction is RNA(n+1) + phosphate = RNA(n) + a ribonucleoside 5'-diphosphate. Functionally, involved in mRNA degradation. Catalyzes the phosphorolysis of single-stranded polyribonucleotides processively in the 3'- to 5'-direction. The sequence is that of Polyribonucleotide nucleotidyltransferase from Rhizorhabdus wittichii (strain DSM 6014 / CCUG 31198 / JCM 15750 / NBRC 105917 / EY 4224 / RW1) (Sphingomonas wittichii).